The sequence spans 244 residues: 3-oxoacyl-[acyl-carrier-protein] reductase FabG (244 aa).

Residues 12 to 15 (GASR) and T37 each bind NADP(+). Residues G50 and G53 each contribute to the Ca(2+) site. NADP(+) is bound by residues 59–60 (NV) and N86. Residue S138 coordinates substrate. N145 provides a ligand contact to Ca(2+). The active-site Proton acceptor is Y151. NADP(+) is bound by residues 151 to 155 (YAAAK) and I184. E233 and T234 together coordinate Ca(2+).

This sequence belongs to the short-chain dehydrogenases/reductases (SDR) family. In terms of assembly, homotetramer.

It carries out the reaction a (3R)-hydroxyacyl-[ACP] + NADP(+) = a 3-oxoacyl-[ACP] + NADPH + H(+). Its pathway is lipid metabolism; fatty acid biosynthesis. Its function is as follows. Catalyzes the NADPH-dependent reduction of beta-ketoacyl-ACP substrates to beta-hydroxyacyl-ACP products, the first reductive step in the elongation cycle of fatty acid biosynthesis. This is 3-oxoacyl-[acyl-carrier-protein] reductase FabG (fabG) from Salmonella typhi.